We begin with the raw amino-acid sequence, 142 residues long: Acetyltransferase SG1711 (142 aa).

The region spanning 1–142 is the N-acetyltransferase domain; sequence MEIRVFRHDD…GKRLIEDQEY (142 aa).

The protein belongs to the acetyltransferase family. YpeA subfamily.

The chain is Acetyltransferase SG1711 from Sodalis glossinidius (strain morsitans).